A 349-amino-acid polypeptide reads, in one-letter code: Phosphorylcholine phosphatase (349 aa).

The signal sequence occupies residues M1 to A22. D53 serves as the catalytic Nucleophile. Residues D53 and D55 each coordinate Mg(2+). D55 acts as the Proton donor in catalysis. A disulfide bridge connects residues C109 and C116. D284 lines the Mg(2+) pocket.

Belongs to the HAD-like hydrolase superfamily. As to quaternary structure, monomer. Homodimer. Homotetramer. Requires Mg(2+) as cofactor.

The protein localises to the periplasm. The catalysed reaction is phosphocholine + H2O = choline + phosphate. The enzyme catalyses phosphoethanolamine + H2O = ethanolamine + phosphate. With respect to regulation, activity is inhibited by high concentrations of phosphorylcholine, phosphorylethanolamine, choline or betaine. Displays different properties depending on the substrate utilized, the pH conditions as well as the presence or absence of metal ions. At pH 5, activity is inhibited by Al(3+) ions. At pH 7.4, the enzyme cannot catalyze the hydrolysis of pNPP, phosphorylethanolamine is a poor substrate in either the presence or absence of divalent cations, and activity measured with phosphorylcholine is independent of divalent cations or is not inhibited by Al(3+) ions. Mg(2+) produces identical activation at pH 5.0 and 7.4, but Zn(2+) is an activator at pH 5.0 and becomes an inhibitor at pH 7.4. This inhibition at pH 7.4 may be due to a transition from octahedral to tetrahedral coordination geometry, which is produced by hydrolysis of the Zn-hexacoordinated complex. Functionally, catalyzes the hydrolysis of phosphorylcholine (PCho) to produce choline and inorganic phosphate. Can also hydrolyze phosphorylethanolamine and the nonphysiological substrate p-nitrophenylphosphate (pNPP). Shows higher affinity and catalytic efficiency with phosphorylcholine as substrate. In terms of biological role, is probably involved in virulence. The bacteria may break down various host compounds or host cell membranes through the coordinated action of phospholipase C and phosphocholine phosphatase. The final consequence of the action of these enzymes is an increase of the free choline concentration, which may promote the pathogenicity of P.aeruginosa. This chain is Phosphorylcholine phosphatase, found in Pseudomonas aeruginosa (strain ATCC 15692 / DSM 22644 / CIP 104116 / JCM 14847 / LMG 12228 / 1C / PRS 101 / PAO1).